The primary structure comprises 77 residues: Metallothionein-like protein 2B (77 aa).

This sequence belongs to the metallothionein superfamily. Type 15 family. Expressed in vascular tissues of all organs. Expressed in root and leaf phloem, pollen and root hairs.

In terms of biological role, metallothioneins have a high content of cysteine residues that bind various heavy metals. Functions as a metal chelator of copper (Cu) and zinc (Zn). Functions cooperatively with the phytochelatin synthase PCS1 to protect plants from Cu and cadmium toxicity. Plays a role in Cu homeostasis, specifically in the remobilization of Cu from senescing leaves. The mobilization of Cu from internal sources is important for seed development. This Arabidopsis thaliana (Mouse-ear cress) protein is Metallothionein-like protein 2B (MT2B).